Here is a 410-residue protein sequence, read N- to C-terminus: Probable inactive allantoicase (410 aa).

It belongs to the allantoicase family.

Functionally, the function of this enzyme is unclear as allantoicase activity is not known to exist in mammals. The protein is Probable inactive allantoicase (ALLC) of Macaca fascicularis (Crab-eating macaque).